The sequence spans 424 residues: Adenylosuccinate synthetase 2 (424 aa).

Residues 11–17 (GDEGKGK) and 39–41 (GHT) contribute to the GTP site. The active-site Proton acceptor is Asp12. Residues Asp12 and Gly39 each coordinate Mg(2+). IMP contacts are provided by residues 12-15 (DEGK), 37-40 (NAGH), Thr127, Arg141, Gln223, Thr238, and Arg302. His40 functions as the Proton donor in the catalytic mechanism. 298 to 304 (TTTGRGR) is a substrate binding site. GTP is bound by residues Arg304, 330-332 (KLD), and 412-414 (SVG).

It belongs to the adenylosuccinate synthetase family. As to quaternary structure, homodimer. Mg(2+) is required as a cofactor.

It localises to the cytoplasm. The enzyme catalyses IMP + L-aspartate + GTP = N(6)-(1,2-dicarboxyethyl)-AMP + GDP + phosphate + 2 H(+). The protein operates within purine metabolism; AMP biosynthesis via de novo pathway; AMP from IMP: step 1/2. In terms of biological role, plays an important role in the de novo pathway of purine nucleotide biosynthesis. Catalyzes the first committed step in the biosynthesis of AMP from IMP. The sequence is that of Adenylosuccinate synthetase 2 from Methanosarcina acetivorans (strain ATCC 35395 / DSM 2834 / JCM 12185 / C2A).